The sequence spans 165 residues: Mediator of RNA polymerase II transcription subunit 10 (165 aa).

2 disordered regions span residues 54 to 81 and 143 to 165; these read SLHT…DPAL and LRGE…RERG. Positions 62 to 77 are enriched in polar residues; sequence TASTTAPNQYQSTNPN.

This sequence belongs to the Mediator complex subunit 10 family. In terms of assembly, component of the Mediator complex.

It is found in the nucleus. Its function is as follows. Component of the Mediator complex, a coactivator involved in the regulated transcription of nearly all RNA polymerase II-dependent genes. Mediator functions as a bridge to convey information from gene-specific regulatory proteins to the basal RNA polymerase II transcription machinery. Mediator is recruited to promoters by direct interactions with regulatory proteins and serves as a scaffold for the assembly of a functional preinitiation complex with RNA polymerase II and the general transcription factors. The chain is Mediator of RNA polymerase II transcription subunit 10 (nut2) from Emericella nidulans (strain FGSC A4 / ATCC 38163 / CBS 112.46 / NRRL 194 / M139) (Aspergillus nidulans).